A 224-amino-acid chain; its full sequence is Small ribosomal subunit protein uS7 (224 aa).

Belongs to the universal ribosomal protein uS7 family. As to quaternary structure, part of the 30S ribosomal subunit.

In terms of biological role, one of the primary rRNA binding proteins, it binds directly to 16S rRNA where it nucleates assembly of the head domain of the 30S subunit. Is located at the subunit interface close to the decoding center. The chain is Small ribosomal subunit protein uS7 from Caldivirga maquilingensis (strain ATCC 700844 / DSM 13496 / JCM 10307 / IC-167).